We begin with the raw amino-acid sequence, 405 residues long: L-rhamnonate dehydratase (405 aa).

Residues His-33 and Arg-59 each coordinate substrate. 3 residues coordinate Mg(2+): Asp-226, Glu-252, and Glu-280. His-329 functions as the Proton acceptor in the catalytic mechanism. A substrate-binding site is contributed by Glu-349.

This sequence belongs to the mandelate racemase/muconate lactonizing enzyme family. RhamD subfamily. As to quaternary structure, homooctamer; tetramer of dimers. Mg(2+) serves as cofactor.

It carries out the reaction L-rhamnonate = 2-dehydro-3-deoxy-L-rhamnonate + H2O. Its function is as follows. Catalyzes the dehydration of L-rhamnonate to 2-keto-3-deoxy-L-rhamnonate (KDR). This is L-rhamnonate dehydratase from Salmonella paratyphi C (strain RKS4594).